The chain runs to 133 residues: Large-conductance mechanosensitive channel (133 aa).

A run of 2 helical transmembrane segments spans residues 14 to 34 (VIDL…VSSL) and 67 to 87 (GNFI…FMFV).

This sequence belongs to the MscL family. In terms of assembly, homopentamer.

The protein localises to the cell membrane. Channel that opens in response to stretch forces in the membrane lipid bilayer. May participate in the regulation of osmotic pressure changes within the cell. The chain is Large-conductance mechanosensitive channel from Bacillus mycoides (strain KBAB4) (Bacillus weihenstephanensis).